A 237-amino-acid chain; its full sequence is Phosphoribosylaminoimidazole-succinocarboxamide synthase (237 aa).

The protein belongs to the SAICAR synthetase family.

The enzyme catalyses 5-amino-1-(5-phospho-D-ribosyl)imidazole-4-carboxylate + L-aspartate + ATP = (2S)-2-[5-amino-1-(5-phospho-beta-D-ribosyl)imidazole-4-carboxamido]succinate + ADP + phosphate + 2 H(+). It functions in the pathway purine metabolism; IMP biosynthesis via de novo pathway; 5-amino-1-(5-phospho-D-ribosyl)imidazole-4-carboxamide from 5-amino-1-(5-phospho-D-ribosyl)imidazole-4-carboxylate: step 1/2. The chain is Phosphoribosylaminoimidazole-succinocarboxamide synthase from Edwardsiella ictaluri (strain 93-146).